Here is a 210-residue protein sequence, read N- to C-terminus: Orotate phosphoribosyltransferase (210 aa).

Residues Arg94, Lys98, His100, and 120-128 (EDLISTGGS) contribute to the 5-phospho-alpha-D-ribose 1-diphosphate site. Residue Ser124 participates in orotate binding.

It belongs to the purine/pyrimidine phosphoribosyltransferase family. PyrE subfamily. As to quaternary structure, homodimer. Mg(2+) serves as cofactor.

The enzyme catalyses orotidine 5'-phosphate + diphosphate = orotate + 5-phospho-alpha-D-ribose 1-diphosphate. The protein operates within pyrimidine metabolism; UMP biosynthesis via de novo pathway; UMP from orotate: step 1/2. In terms of biological role, catalyzes the transfer of a ribosyl phosphate group from 5-phosphoribose 1-diphosphate to orotate, leading to the formation of orotidine monophosphate (OMP). In Bacillus cereus (strain B4264), this protein is Orotate phosphoribosyltransferase.